The sequence spans 423 residues: tRNA(Ile)-lysidine synthase (423 aa).

Residue 27–32 (SGGVDS) participates in ATP binding.

Belongs to the tRNA(Ile)-lysidine synthase family.

The protein resides in the cytoplasm. The catalysed reaction is cytidine(34) in tRNA(Ile2) + L-lysine + ATP = lysidine(34) in tRNA(Ile2) + AMP + diphosphate + H(+). Functionally, ligates lysine onto the cytidine present at position 34 of the AUA codon-specific tRNA(Ile) that contains the anticodon CAU, in an ATP-dependent manner. Cytidine is converted to lysidine, thus changing the amino acid specificity of the tRNA from methionine to isoleucine. The polypeptide is tRNA(Ile)-lysidine synthase (Streptococcus mutans serotype c (strain ATCC 700610 / UA159)).